The sequence spans 119 residues: Phosphoribosyl-AMP cyclohydrolase (119 aa).

Position 77 (aspartate 77) interacts with Mg(2+). Cysteine 78 contacts Zn(2+). Residues aspartate 79 and aspartate 81 each contribute to the Mg(2+) site. The Zn(2+) site is built by cysteine 94 and cysteine 101.

This sequence belongs to the PRA-CH family. Homodimer. Mg(2+) serves as cofactor. Requires Zn(2+) as cofactor.

The protein resides in the cytoplasm. The catalysed reaction is 1-(5-phospho-beta-D-ribosyl)-5'-AMP + H2O = 1-(5-phospho-beta-D-ribosyl)-5-[(5-phospho-beta-D-ribosylamino)methylideneamino]imidazole-4-carboxamide. Its pathway is amino-acid biosynthesis; L-histidine biosynthesis; L-histidine from 5-phospho-alpha-D-ribose 1-diphosphate: step 3/9. In terms of biological role, catalyzes the hydrolysis of the adenine ring of phosphoribosyl-AMP. The polypeptide is Phosphoribosyl-AMP cyclohydrolase (Cereibacter sphaeroides (strain ATCC 17025 / ATH 2.4.3) (Rhodobacter sphaeroides)).